A 263-amino-acid chain; its full sequence is Serine protease ami (263 aa).

An N-terminal signal peptide occupies residues 1–21 (MNISRVLFAVVLVLTVSTYEC). N-linked (GlcNAc...) asparagine glycosylation is present at N2. Positions 22–26 (RPRGR) are cleaved as a propeptide — activation peptide. A Peptidase S1 domain is found at 27-254 (ILGGQDSKEK…YKSWIMETMY (228 aa)). An intrachain disulfide couples C52 to C68. H67 (charge relay system) is an active-site residue. Residues N73, N74, and N108 are each glycosylated (N-linked (GlcNAc...) asparagine). Residue D115 is the Charge relay system of the active site. 3 cysteine pairs are disulfide-bonded: C149–C215, C180–C196, and C205–C230. S209 (charge relay system) is an active-site residue. N-linked (GlcNAc...) asparagine glycosylation is present at N255.

The protein belongs to the peptidase S1 family. In the embryo, localizes to paraxial regions at the neurula stage and anterior ventral regions at the tailbud stage. From the late tailbud to tadpole stage, expressed along the forming blood vessels including the anterior cardinal veins, posterior cardinal veins, intersomitic veins, dorsal longitudinal anastomosing vessel, dorsal aorta, pronephric sinus and most prominently around the vascular vitelline network, where expression shows left-right asymmetry in the stage 42 embryo. Localizes to endothelial cells. In adults, shows highest expression in liver with moderate levels of expression in the fat body, lung, gut and vessels. Weakly expressed in adult heart, muscle, testis and ovary.

Its subcellular location is the secreted. Probable serine protease. The sequence is that of Serine protease ami from Xenopus laevis (African clawed frog).